We begin with the raw amino-acid sequence, 535 residues long: Solute carrier family 22 member 7 (535 aa).

The next 12 helical transmembrane spans lie at 21–41 (LVLM…PVFM), 144–164 (ITST…GYLS), 178–198 (VSSL…MFVV), 202–222 (LTGS…LEWL), 232–252 (VIST…GYLI), 257–277 (WLLL…WWVP), 344–364 (ISLC…GLTL), 375–395 (QTQL…YFLV), 402–422 (LTEA…LLVS), 429–449 (ITAL…TAYL), 464–484 (LGLT…AALL), and 489–509 (LLLP…TALL).

It belongs to the major facilitator (TC 2.A.1) superfamily. Organic cation transporter (TC 2.A.1.19) family. In terms of tissue distribution, expressed in liver and kidney. Expressed at low levels in adipose tissue. Expressed in fetal liver. In kidney, expressed at the brush border of the proximal tubule S3 segment (S3) in the outer stripe and medullary rays. In kidney, expression is higher in female than male.

Its subcellular location is the basolateral cell membrane. The protein localises to the apical cell membrane. The protein resides in the cell membrane. The catalysed reaction is orotate(out) + L-glutamate(in) = orotate(in) + L-glutamate(out). It carries out the reaction 3',5'-cyclic GMP(in) = 3',5'-cyclic GMP(out). It catalyses the reaction GMP(in) = GMP(out). The enzyme catalyses 2'-deoxyguanosine(in) = 2'-deoxyguanosine(out). The catalysed reaction is GDP(in) = GDP(out). It carries out the reaction guanosine(in) = guanosine(out). It catalyses the reaction GTP(in) = GTP(out). The enzyme catalyses 3',5'-cyclic AMP(in) = 3',5'-cyclic AMP(out). The catalysed reaction is creatinine(in) = creatinine(out). It carries out the reaction prostaglandin E2(out) = prostaglandin E2(in). It catalyses the reaction 2-oxoglutarate(in) = 2-oxoglutarate(out). The enzyme catalyses glutarate(in) = glutarate(out). The catalysed reaction is urate(out) = urate(in). It carries out the reaction estrone 3-sulfate(out) = estrone 3-sulfate(in). In terms of biological role, functions as a Na(+)-independent bidirectional multispecific transporter. Contributes to the renal and hepatic elimination of endogenous organic compounds from the systemic circulation into the urine and bile, respectively. Capable of transporting a wide range of purine and pyrimidine nucleobases, nucleosides, and nucleotides with cGMP, 2'deoxyguanosine and GMP being the preferred substrates. Functions as a pH- and chloride-independent cGMP bidirectional facilitative transporter that can regulate both intracellular and extracellular levels of cGMP and may be involved in cGMP signaling pathways. Mediates orotate/glutamate bidirectional exchange and most likely display a physiological role in hepatic release of glutamate into the blood. Involved in renal secretion and possible reabsorption of creatinine. Able to uptake prostaglandin E2 (PGE2) and may contribute to PGE2 renal excretion. Also transports alpha-ketoglutarate and urate. Apart from the orotate/glutamate exchange, the counterions for the uptake of other SLC22A7/OAT2 substrates remain to be identified. This Rattus norvegicus (Rat) protein is Solute carrier family 22 member 7.